The following is a 264-amino-acid chain: ATP synthase subunit a (264 aa).

A run of 5 helical transmembrane segments spans residues 39-59, 97-117, 139-159, 205-225, and 239-259; these read LDTL…FYII, VAPL…MDLV, TADP…VVFY, LFGN…LPWW, and LLVI…YISL.

The protein belongs to the ATPase A chain family. F-type ATPases have 2 components, CF(1) - the catalytic core - and CF(0) - the membrane proton channel. CF(1) has five subunits: alpha(3), beta(3), gamma(1), delta(1), epsilon(1). CF(0) has three main subunits: a(1), b(2) and c(9-12). The alpha and beta chains form an alternating ring which encloses part of the gamma chain. CF(1) is attached to CF(0) by a central stalk formed by the gamma and epsilon chains, while a peripheral stalk is formed by the delta and b chains.

The protein resides in the cell inner membrane. Its function is as follows. Key component of the proton channel; it plays a direct role in the translocation of protons across the membrane. The polypeptide is ATP synthase subunit a (Coxiella burnetii (strain CbuG_Q212) (Coxiella burnetii (strain Q212))).